The primary structure comprises 330 residues: Ribosomal RNA small subunit methyltransferase H (330 aa).

S-adenosyl-L-methionine-binding positions include 40–42 (GGY), D58, F85, D101, and Q108.

Belongs to the methyltransferase superfamily. RsmH family.

It is found in the cytoplasm. The catalysed reaction is cytidine(1402) in 16S rRNA + S-adenosyl-L-methionine = N(4)-methylcytidine(1402) in 16S rRNA + S-adenosyl-L-homocysteine + H(+). Its function is as follows. Specifically methylates the N4 position of cytidine in position 1402 (C1402) of 16S rRNA. This is Ribosomal RNA small subunit methyltransferase H from Roseobacter denitrificans (strain ATCC 33942 / OCh 114) (Erythrobacter sp. (strain OCh 114)).